The following is a 424-amino-acid chain: Serine--tRNA ligase (424 aa).

An L-serine-binding site is contributed by 230–232; it reads TSE. Residues 261 to 263 and Val-277 each bind ATP; that span reads RKE. Residue Glu-284 participates in L-serine binding. Residue 348–351 coordinates ATP; the sequence is ELTS. Residue Thr-382 coordinates L-serine.

This sequence belongs to the class-II aminoacyl-tRNA synthetase family. Type-1 seryl-tRNA synthetase subfamily. Homodimer. The tRNA molecule binds across the dimer.

It localises to the cytoplasm. The catalysed reaction is tRNA(Ser) + L-serine + ATP = L-seryl-tRNA(Ser) + AMP + diphosphate + H(+). It carries out the reaction tRNA(Sec) + L-serine + ATP = L-seryl-tRNA(Sec) + AMP + diphosphate + H(+). It functions in the pathway aminoacyl-tRNA biosynthesis; selenocysteinyl-tRNA(Sec) biosynthesis; L-seryl-tRNA(Sec) from L-serine and tRNA(Sec): step 1/1. Its function is as follows. Catalyzes the attachment of serine to tRNA(Ser). Is also able to aminoacylate tRNA(Sec) with serine, to form the misacylated tRNA L-seryl-tRNA(Sec), which will be further converted into selenocysteinyl-tRNA(Sec). The chain is Serine--tRNA ligase from Nocardioides sp. (strain ATCC BAA-499 / JS614).